A 270-amino-acid polypeptide reads, in one-letter code: Sorting nexin-11 (270 aa).

Residues 16–132 enclose the PX domain; sequence VITVRVQDPR…HLFLQSQLSV (117 aa). Positions 59, 85, and 99 each coordinate a 1,2-diacyl-sn-glycero-3-phospho-(1D-myo-inositol-3-phosphate). An important for membrane trafficking region spans residues 135–139; sequence IEACV. Positions 168 to 177 are enriched in basic and acidic residues; the sequence is SSSHLAKGDQ. The segment at 168–203 is disordered; sequence SSSHLAKGDQPKSCCFLPRSGRRSSPSPPPSEEKDH.

Belongs to the sorting nexin family. As to quaternary structure, monomer. Interacts with TRPV3; this interaction promotes TRPV3 trafficking from the cell membrane to lysosome for degradation.

The protein localises to the cell membrane. It localises to the endosome. It is found in the cytoplasm. Functionally, phosphoinositide-binding protein involved in protein sorting and membrane trafficking in endosomes. Regulates the levels of TRPV3 by promoting its trafficking from the cell membrane to lysosome for degradation. This is Sorting nexin-11 (SNX11) from Homo sapiens (Human).